The primary structure comprises 250 residues: Mediator of RNA polymerase II transcription subunit 6 (250 aa).

Residues 166–250 form a disordered region; sequence KKREEEKKED…EPTARTTSKQ (85 aa). A compositionally biased stretch (acidic residues) spans 204-223; sequence PAEDALEREEKEEVEEEEEE. A compositionally biased stretch (basic and acidic residues) spans 224–239; sequence TLKTEEPTTSTDEPKF.

This sequence belongs to the Mediator complex subunit 6 family. In terms of assembly, component of the Mediator complex. Interacts with let-19/mdt-13. Interacts with RNA polymerase II. Interacts with mdt-28.

Its subcellular location is the nucleus. Component of the Mediator complex, a coactivator involved in the regulated transcription of nearly all RNA polymerase II-dependent genes. Mediator functions as a bridge to convey information from gene-specific regulatory proteins to the basal RNA polymerase II transcription machinery. Mediator is recruited to promoters by direct interactions with regulatory proteins and serves as a scaffold for the assembly of a functional preinitiation complex with RNA polymerase II and the general transcription factors. Acts to repress beta-catenin target genes. Required for asymmetric division of T-cells and for gonad and germ cell development. This is Mediator of RNA polymerase II transcription subunit 6 (mdt-6) from Caenorhabditis elegans.